The sequence spans 575 residues: MSRLDRSRYASLYGPTVGDRIRLADTDLFIEVTEDRSRGPGLAGSGDEAVFGGGKVIRESMGQSRATRAQGAPDLVITGAVVLDHWGVIKADVGIRDGRIVALGKAGNPDTMDGVHPDLVIGPGTEIIAGNGKILTAGAVDCHVHLICPQQVPEALGAGITTLIGGGTGPAEGTKATTVTPGSWNLARMLSAMDDWPVNIVLLGKGNTVNDESMWEQLRAGAAGFKLHEDWGTTPAAIDACLRVADAAGVQVALHSDTLNEAGFVEDTLAAIAGRAIHAYHTEGAGGGHAPDIITVAAAANVLPSSTNPTRPHTVNTLDEHLDMLMVCHHLNPSVPEDLAFAESRIRPSTIAAEDILHDLGAISMIGSDSQAMGRIGEVVLRTWQTAHVMKRRRGALPGDGPADNARARRYVAKYTICPAVAHGLDAQIGSVEPGKLADLVVYDPAFFGVRPSLVLKGGFVAWAAMGDANASIPTPQPVLPRPMWGAARGPAAASSLTFVSPAAISDGLPERLGLATPVVPVEDVRRRGKADLPENTATPDIRVDPDTFTVSIDGEAVEADPVRELPMAQRYFLF.

Positions 138–575 (GAVDCHVHLI…LPMAQRYFLF (438 aa)) constitute a Urease domain. Ni(2+) contacts are provided by His-143, His-145, and Lys-226. Lys-226 bears the N6-carboxylysine mark. His-228 is a binding site for substrate. Ni(2+) contacts are provided by His-255 and His-281. His-329 serves as the catalytic Proton donor. Asp-369 is a binding site for Ni(2+).

This sequence belongs to the metallo-dependent hydrolases superfamily. Urease alpha subunit family. As to quaternary structure, heterotrimer of UreA (gamma), UreB (beta) and UreC (alpha) subunits. Three heterotrimers associate to form the active enzyme. It depends on Ni cation as a cofactor. Post-translationally, carboxylation allows a single lysine to coordinate two nickel ions.

The protein resides in the cytoplasm. The enzyme catalyses urea + 2 H2O + H(+) = hydrogencarbonate + 2 NH4(+). It functions in the pathway nitrogen metabolism; urea degradation; CO(2) and NH(3) from urea (urease route): step 1/1. In Frankia alni (strain DSM 45986 / CECT 9034 / ACN14a), this protein is Urease subunit alpha.